Reading from the N-terminus, the 73-residue chain is Small ribosomal subunit protein bS21 (73 aa).

The protein belongs to the bacterial ribosomal protein bS21 family.

In Parvibaculum lavamentivorans (strain DS-1 / DSM 13023 / NCIMB 13966), this protein is Small ribosomal subunit protein bS21.